A 616-amino-acid polypeptide reads, in one-letter code: MRAWILLLAVLATSQPIVQVASTEDTSISQRFIAAIAPTRTEPSAASAAAAAATATATATATTALAKAFNPFNELLYKSSDSDSDNNNNNYKNRNNNNNNLNKGPRNNKNKGNKHSKSDANRQFNEVHKPRTDQLENSKNKPKQLVNKTNKMAVKDQKHHQPQQQQQQHHKPATTTALTSTESHQSPIETIFVDDPALALEEEVASINVPANAGAIIEEQEPSTYSKKELIKDKLKPDPSTLVEIENSLLSLFNMKRPPKIDRSKIIIPEAMKKLYAEIMGHELDSVNIPRPGLLTKSANTVRSFTHKDSKIDDRFPHHHRFRLHFDVKSIPAEEKLKAAELQLTRDALAQAAVASTSANRTRYQVLVYDITRVGVRGQREPSYLLLDTKTVRLNSTDTVSLDVQPAVDRWLATPQKNYGLLVEVRTMRSLKPAPHHHVRLRRSADEAHEQWQHKQPLLFAYTDDGRHKARSIRDVSGGGGGGGGAGEGGKGNGGGRNRRHQRRPARRKNHEETCRRHSLYVDFADVGWDDWIVAPPGYDAYYCHGKCPFPLADHFNSTNHAVVQTLVNNLNPGKVPKACCVPTQLDSVAMLYLNDQSTVVLKNYQEMTVVGCGCR.

The N-terminal stretch at 1–23 (MRAWILLLAVLATSQPIVQVAST) is a signal peptide. A propeptide spanning residues 24–474 (EDTSISQRFI…DGRHKARSIR (451 aa)) is cleaved from the precursor. Positions 80–188 (SDSDSDNNNN…TSTESHQSPI (109 aa)) are disordered. The span at 86–105 (NNNNNYKNRNNNNNNLNKGP) shows a compositional bias: low complexity. Residues 106 to 115 (RNNKNKGNKH) are compositionally biased toward basic residues. Residues 116–139 (SKSDANRQFNEVHKPRTDQLENSK) are compositionally biased toward basic and acidic residues. The N-linked (GlcNAc...) asparagine glycan is linked to Asn147. The span at 173–188 (ATTTALTSTESHQSPI) shows a compositional bias: polar residues. N-linked (GlcNAc...) asparagine glycans are attached at residues Asn360 and Asn395. Residues 470–512 (ARSIRDVSGGGGGGGGAGEGGKGNGGGRNRRHQRRPARRKNHE) are disordered. The span at 477 to 496 (SGGGGGGGGAGEGGKGNGGG) shows a compositional bias: gly residues. Residues 497–509 (RNRRHQRRPARRK) are compositionally biased toward basic residues. 3 cysteine pairs are disulfide-bonded: Cys515–Cys581, Cys544–Cys613, and Cys548–Cys615. Asn557 carries N-linked (GlcNAc...) asparagine glycosylation.

The protein belongs to the TGF-beta family. As to quaternary structure, heterodimers of scw/dpp are the active subunit, dpp/dpp homodimers elicit a basal response and scw/scw homodimers alone are ineffective in specifying a dorsal pattern. Expressed in the imaginal discs associated with establishment of the proximal-distal axis of the appendages, and midgut mesoderm.

The protein localises to the secreted. Its function is as follows. Acts as an extracellular morphogen to establish at least two cellular response thresholds within the dorsal half of the drosophila embryo. Required for the proper development of the embryonic dorsal hypoderm, for viability of larvae and for cell viability of the epithelial cells in the imaginal disks. Acts together with scw. The protein is Protein decapentaplegic (dpp) of Drosophila pseudoobscura pseudoobscura (Fruit fly).